The following is a 354-amino-acid chain: Src kinase-associated phosphoprotein 1 (354 aa).

A PH domain is found at 107–210; the sequence is NVIKQGYLEK…WVDQISFLLK (104 aa). 2 positions are modified to phosphotyrosine: tyrosine 142 and tyrosine 236. Residues tyrosine 267 and tyrosine 290 each carry the phosphotyrosine; by FYN modification. Positions 285-290 are interaction with FYB1; sequence RRRVDY. The 62-residue stretch at 289–350 folds into the SH3 domain; that stretch reads DYADYYQGLW…PKDYLTTAFE (62 aa).

It belongs to the SKAP family. Homodimer. Interacts with FYN. Interacts with PTPRC. Interacts with GRB2 when phosphorylated on Tyr-267. Interacts with FYB1, which is required for SKAP2 protein stability. Part of a complex consisting of SKAP1, FYB1 and CLNK. Interacts with RASGRP1. Interacts with FYB2. Post-translationally, phosphorylated on tyrosines. Phosphorylation by FYN on Tyr-267 is required for GRB2 interaction. Phosphorylation by FYN on Tyr-290 abolishes interaction with FYB1. Tyr-236 is dephosphorylated by PTPRC. Expressed in mast cells (at protein level).

Its subcellular location is the cytoplasm. It is found in the nucleus. It localises to the cell membrane. Functionally, positively regulates T-cell receptor signaling by enhancing the MAP kinase pathway. Required for optimal conjugation between T-cells and antigen-presenting cells by promoting the clustering of integrin ITGAL on the surface of T-cells. May be involved in high affinity immunoglobulin epsilon receptor signaling in mast cells. In Rattus norvegicus (Rat), this protein is Src kinase-associated phosphoprotein 1 (Skap1).